The primary structure comprises 337 residues: Beta-ketoacyl-[acyl-carrier-protein] synthase III (337 aa).

Residues C119 and H260 contribute to the active site. The tract at residues 261–265 (QANQR) is ACP-binding. Residue N290 is part of the active site.

This sequence belongs to the thiolase-like superfamily. FabH family. Homodimer.

The protein localises to the cytoplasm. It carries out the reaction malonyl-[ACP] + acetyl-CoA + H(+) = 3-oxobutanoyl-[ACP] + CO2 + CoA. The protein operates within lipid metabolism; fatty acid biosynthesis. Functionally, catalyzes the condensation reaction of fatty acid synthesis by the addition to an acyl acceptor of two carbons from malonyl-ACP. Catalyzes the first condensation reaction which initiates fatty acid synthesis and may therefore play a role in governing the total rate of fatty acid production. Possesses both acetoacetyl-ACP synthase and acetyl transacylase activities. Its substrate specificity determines the biosynthesis of branched-chain and/or straight-chain of fatty acids. This is Beta-ketoacyl-[acyl-carrier-protein] synthase III from Synechococcus sp. (strain WH7803).